We begin with the raw amino-acid sequence, 348 residues long: Anthranilate phosphoribosyltransferase (348 aa).

5-phospho-alpha-D-ribose 1-diphosphate-binding positions include Gly-93, 96–97, Thr-101, 103–106, 121–129, and Ser-133; these read GD, NVST, and KHGNRAVSS. Gly-93 is an anthranilate binding site. Mg(2+) is bound at residue Ser-105. Asn-124 contacts anthranilate. Residue Arg-179 participates in anthranilate binding. Residues Asp-238 and Glu-239 each coordinate Mg(2+).

The protein belongs to the anthranilate phosphoribosyltransferase family. In terms of assembly, homodimer. It depends on Mg(2+) as a cofactor.

It catalyses the reaction N-(5-phospho-beta-D-ribosyl)anthranilate + diphosphate = 5-phospho-alpha-D-ribose 1-diphosphate + anthranilate. It functions in the pathway amino-acid biosynthesis; L-tryptophan biosynthesis; L-tryptophan from chorismate: step 2/5. Its function is as follows. Catalyzes the transfer of the phosphoribosyl group of 5-phosphorylribose-1-pyrophosphate (PRPP) to anthranilate to yield N-(5'-phosphoribosyl)-anthranilate (PRA). The sequence is that of Anthranilate phosphoribosyltransferase from Desulfotalea psychrophila (strain LSv54 / DSM 12343).